Consider the following 725-residue polypeptide: Threonine--tRNA ligase, cytoplasmic (725 aa).

The TGS domain occupies 80 to 142; sequence EPIQITLPDG…EGNAKLELLK (63 aa).

The protein belongs to the class-II aminoacyl-tRNA synthetase family.

It is found in the cytoplasm. It catalyses the reaction tRNA(Thr) + L-threonine + ATP = L-threonyl-tRNA(Thr) + AMP + diphosphate + H(+). The polypeptide is Threonine--tRNA ligase, cytoplasmic (Caenorhabditis elegans).